A 425-amino-acid chain; its full sequence is Ribosome biogenesis protein WDR12 homolog (425 aa).

Residues 13–94 (LQLHLITKQK…EDTVELEYVE (82 aa)) form a ubiquitin-like (UBL) domain region. WD repeat units follow at residues 106-143 (LHDD…KLTI), 145-187 (GHIA…NSVE), 194-233 (GHER…GGGD), 258-296 (GHRE…IKSE), 298-337 (SGNK…GTLV), 343-383 (GHTQ…APIF), and 387-425 (GHED…GGEK). Residues 227 to 247 (VRSGGGDSEPSTSKRQKLDQG) are disordered.

It belongs to the WD repeat WDR12/YTM1 family.

It localises to the nucleus. The protein localises to the nucleolus. The protein resides in the nucleoplasm. Functionally, required for maturation of ribosomal RNAs and formation of the large ribosomal subunit. The protein is Ribosome biogenesis protein WDR12 homolog of Culex quinquefasciatus (Southern house mosquito).